We begin with the raw amino-acid sequence, 135 residues long: uncharacterized protein (135 aa).

Residues 4-24 traverse the membrane as a helical segment; sequence LGVFLILASIVCGVVAICGCT.

Its subcellular location is the membrane. This is an uncharacterized protein from Methanocaldococcus jannaschii (strain ATCC 43067 / DSM 2661 / JAL-1 / JCM 10045 / NBRC 100440) (Methanococcus jannaschii).